The chain runs to 446 residues: Dual specificity mitogen-activated protein kinase kinase 2 (446 aa).

Positions 27-42 (SSGSSAGLGFQGQSQQ) are enriched in low complexity. The segment at 27–51 (SSGSSAGLGFQGQSQQHSTVNSMQG) is disordered. A Protein kinase domain is found at 149 to 414 (LKDLGEIGRG…YKELLKHPFI (266 aa)). Residues 155–163 (IGRGAYGSV) and K178 contribute to the ATP site. D276 serves as the catalytic Proton acceptor. Position 304 is a phosphoserine; by RAF (S304). The residue at position 308 (T308) is a Phosphothreonine; by RAF.

It belongs to the protein kinase superfamily. STE Ser/Thr protein kinase family. MAP kinase kinase subfamily. Post-translationally, MAPKK is itself dependent on Ser/Thr phosphorylation for activity catalyzed by MAP kinase kinase kinases. Expressed abundantly in the adult brain and muscle.

It catalyses the reaction L-seryl-[protein] + ATP = O-phospho-L-seryl-[protein] + ADP + H(+). The catalysed reaction is L-threonyl-[protein] + ATP = O-phospho-L-threonyl-[protein] + ADP + H(+). The enzyme catalyses L-tyrosyl-[protein] + ATP = O-phospho-L-tyrosyl-[protein] + ADP + H(+). Catalyzes the concomitant phosphorylation of a threonine and a tyrosine residue in a Thr-Glu-Tyr sequence located in MAP kinases. The chain is Dual specificity mitogen-activated protein kinase kinase 2 (map2k2) from Xenopus laevis (African clawed frog).